Here is a 187-residue protein sequence, read N- to C-terminus: NADH-quinone oxidoreductase subunit B (187 aa).

Residues Cys-55, Cys-56, Cys-121, and Cys-150 each contribute to the [4Fe-4S] cluster site.

Belongs to the complex I 20 kDa subunit family. In terms of assembly, NDH-1 is composed of 14 different subunits. Subunits NuoB, C, D, E, F, and G constitute the peripheral sector of the complex. Requires [4Fe-4S] cluster as cofactor.

It localises to the cell inner membrane. It carries out the reaction a quinone + NADH + 5 H(+)(in) = a quinol + NAD(+) + 4 H(+)(out). NDH-1 shuttles electrons from NADH, via FMN and iron-sulfur (Fe-S) centers, to quinones in the respiratory chain. The immediate electron acceptor for the enzyme in this species is believed to be ubiquinone. Couples the redox reaction to proton translocation (for every two electrons transferred, four hydrogen ions are translocated across the cytoplasmic membrane), and thus conserves the redox energy in a proton gradient. This chain is NADH-quinone oxidoreductase subunit B, found in Bdellovibrio bacteriovorus (strain ATCC 15356 / DSM 50701 / NCIMB 9529 / HD100).